The primary structure comprises 231 residues: Insertion sequence IS1162 putative ATP-binding protein (231 aa).

An ATP-binding site is contributed by 107-114 (GPTGVGKT).

This sequence belongs to the IS21/IS1162 putative ATP-binding protein family.

In Pseudomonas fluorescens, this protein is Insertion sequence IS1162 putative ATP-binding protein.